A 51-amino-acid polypeptide reads, in one-letter code: Large ribosomal subunit protein eL39 (51 aa).

It belongs to the eukaryotic ribosomal protein eL39 family. In terms of assembly, interacts with impact.

The protein is Large ribosomal subunit protein eL39 (rpl39) of Ictalurus punctatus (Channel catfish).